Reading from the N-terminus, the 323-residue chain is Beta-ketoacyl-[acyl-carrier-protein] synthase III (323 aa).

Catalysis depends on residues Cys113 and His250. Residues 251–255 (QANRR) form an ACP-binding region. Asn280 is an active-site residue.

The protein belongs to the thiolase-like superfamily. FabH family. In terms of assembly, homodimer.

The protein resides in the cytoplasm. It catalyses the reaction malonyl-[ACP] + acetyl-CoA + H(+) = 3-oxobutanoyl-[ACP] + CO2 + CoA. Its pathway is lipid metabolism; fatty acid biosynthesis. Its function is as follows. Catalyzes the condensation reaction of fatty acid synthesis by the addition to an acyl acceptor of two carbons from malonyl-ACP. Catalyzes the first condensation reaction which initiates fatty acid synthesis and may therefore play a role in governing the total rate of fatty acid production. Possesses both acetoacetyl-ACP synthase and acetyl transacylase activities. Its substrate specificity determines the biosynthesis of branched-chain and/or straight-chain of fatty acids. This Rhizobium johnstonii (strain DSM 114642 / LMG 32736 / 3841) (Rhizobium leguminosarum bv. viciae) protein is Beta-ketoacyl-[acyl-carrier-protein] synthase III.